We begin with the raw amino-acid sequence, 335 residues long: Glucokinase (335 aa).

Position 11–16 (11–16 (ADIGGT)) interacts with ATP.

Belongs to the bacterial glucokinase family.

It is found in the cytoplasm. The catalysed reaction is D-glucose + ATP = D-glucose 6-phosphate + ADP + H(+). The protein is Glucokinase of Xanthomonas oryzae pv. oryzae (strain MAFF 311018).